The chain runs to 365 residues: MAKDYYKILGVDRNASEEDIKKAFRELAKKWHPDLHPDNKAEAEEKFKEISEAYEVLSDPEKRRIYDQTGSVDFGGGGSNFNWDNFTHFSDINDIFNEIFGGNFGSDFFSGFGNRQSTRNIDLDMYTNLDISLEEAYYGTEKRIKFRRNAICPDCKGTGAKNGKLITCPTCHGTGQQRVVRGQGFFRMVTVTTCNTCGGKGRIPEEKCPRCNGTGTIVVDEDITVKIPRGATDNLRLRVSGKGQSYDGRTGDLYVILRIKQDKNLQRINDDLLLDQKINFGQAALGADIPIQIFNEKYNLKIPEGTQPGDVIKIKGAGMPHLNGHGSGDLLVRINVEVPKRLTAKQRELIRELFDIKENHKSWFH.

A J domain is found at 4 to 70 (DYYKILGVDR…EKRRIYDQTG (67 aa)). A CR-type zinc finger spans residues 139–220 (GTEKRIKFRR…CNGTGTIVVD (82 aa)). Positions 152, 155, 168, 171, 194, 197, 208, and 211 each coordinate Zn(2+). CXXCXGXG motif repeat units follow at residues 152–159 (CPDCKGTG), 168–175 (CPTCHGTG), 194–201 (CNTCGGKG), and 208–215 (CPRCNGTG).

The protein belongs to the DnaJ family. In terms of assembly, homodimer. Requires Zn(2+) as cofactor.

The protein resides in the cytoplasm. Its function is as follows. Participates actively in the response to hyperosmotic and heat shock by preventing the aggregation of stress-denatured proteins and by disaggregating proteins, also in an autonomous, DnaK-independent fashion. Unfolded proteins bind initially to DnaJ; upon interaction with the DnaJ-bound protein, DnaK hydrolyzes its bound ATP, resulting in the formation of a stable complex. GrpE releases ADP from DnaK; ATP binding to DnaK triggers the release of the substrate protein, thus completing the reaction cycle. Several rounds of ATP-dependent interactions between DnaJ, DnaK and GrpE are required for fully efficient folding. Also involved, together with DnaK and GrpE, in the DNA replication of plasmids through activation of initiation proteins. In Thermoplasma volcanium (strain ATCC 51530 / DSM 4299 / JCM 9571 / NBRC 15438 / GSS1), this protein is Chaperone protein DnaJ.